The sequence spans 250 residues: Ubiquinone/menaquinone biosynthesis C-methyltransferase UbiE (250 aa).

S-adenosyl-L-methionine-binding positions include Thr73, Asp94, 122-123 (NA), and Ser139.

This sequence belongs to the class I-like SAM-binding methyltransferase superfamily. MenG/UbiE family.

It carries out the reaction a 2-demethylmenaquinol + S-adenosyl-L-methionine = a menaquinol + S-adenosyl-L-homocysteine + H(+). It catalyses the reaction a 2-methoxy-6-(all-trans-polyprenyl)benzene-1,4-diol + S-adenosyl-L-methionine = a 5-methoxy-2-methyl-3-(all-trans-polyprenyl)benzene-1,4-diol + S-adenosyl-L-homocysteine + H(+). Its pathway is quinol/quinone metabolism; menaquinone biosynthesis; menaquinol from 1,4-dihydroxy-2-naphthoate: step 2/2. The protein operates within cofactor biosynthesis; ubiquinone biosynthesis. In terms of biological role, methyltransferase required for the conversion of demethylmenaquinol (DMKH2) to menaquinol (MKH2) and the conversion of 2-polyprenyl-6-methoxy-1,4-benzoquinol (DDMQH2) to 2-polyprenyl-3-methyl-6-methoxy-1,4-benzoquinol (DMQH2). The sequence is that of Ubiquinone/menaquinone biosynthesis C-methyltransferase UbiE from Francisella philomiragia subsp. philomiragia (strain ATCC 25017 / CCUG 19701 / FSC 153 / O#319-036).